The sequence spans 290 residues: Pyridoxal kinase PdxY (290 aa).

Residues S12 and 47 to 48 contribute to the substrate site; that span reads TQ. Residues D114, E151, K184, and 211-214 contribute to the ATP site; that span reads RPLL. D225 is a binding site for substrate.

It belongs to the pyridoxine kinase family. PdxY subfamily. In terms of assembly, homodimer. Mg(2+) is required as a cofactor.

The catalysed reaction is pyridoxal + ATP = pyridoxal 5'-phosphate + ADP + H(+). It functions in the pathway cofactor metabolism; pyridoxal 5'-phosphate salvage; pyridoxal 5'-phosphate from pyridoxal: step 1/1. Functionally, pyridoxal kinase involved in the salvage pathway of pyridoxal 5'-phosphate (PLP). Catalyzes the phosphorylation of pyridoxal to PLP. The polypeptide is Pyridoxal kinase PdxY (Pseudomonas putida (strain GB-1)).